Here is a 90-residue protein sequence, read N- to C-terminus: MKVIPLGSRLLIKPIQEEKRTEGGIVLPDTAKEKPMKAEIVAVGNLEDADVDLHVGDKVIFSKYSGTEIKIEEEDYIIIDVEDILAKIED.

The protein belongs to the GroES chaperonin family. Heptamer of 7 subunits arranged in a ring. Interacts with the chaperonin GroEL.

It is found in the cytoplasm. Functionally, together with the chaperonin GroEL, plays an essential role in assisting protein folding. The GroEL-GroES system forms a nano-cage that allows encapsulation of the non-native substrate proteins and provides a physical environment optimized to promote and accelerate protein folding. GroES binds to the apical surface of the GroEL ring, thereby capping the opening of the GroEL channel. The polypeptide is Co-chaperonin GroES (Thermosipho africanus (strain TCF52B)).